The chain runs to 133 residues: Small ribosomal subunit protein uS11 (133 aa).

It belongs to the universal ribosomal protein uS11 family. As to quaternary structure, part of the 30S ribosomal subunit. Interacts with proteins S7 and S18. Binds to IF-3.

Functionally, located on the platform of the 30S subunit, it bridges several disparate RNA helices of the 16S rRNA. Forms part of the Shine-Dalgarno cleft in the 70S ribosome. This Chlamydia pneumoniae (Chlamydophila pneumoniae) protein is Small ribosomal subunit protein uS11.